A 162-amino-acid chain; its full sequence is Probable chemoreceptor glutamine deamidase CheD 3 (162 aa).

The protein belongs to the CheD family.

The enzyme catalyses L-glutaminyl-[protein] + H2O = L-glutamyl-[protein] + NH4(+). Its function is as follows. Probably deamidates glutamine residues to glutamate on methyl-accepting chemotaxis receptors (MCPs), playing an important role in chemotaxis. This chain is Probable chemoreceptor glutamine deamidase CheD 3, found in Geobacter sulfurreducens (strain ATCC 51573 / DSM 12127 / PCA).